A 353-amino-acid chain; its full sequence is Inositol-tetrakisphosphate 1-kinase 3 (353 aa).

The disordered stretch occupies residues 1 to 25 (MKLTDNEEITMNGTREMETTEQETS). 1D-myo-inositol 1,3,4-trisphosphate contacts are provided by lysine 50 and lysine 92. Residues arginine 127 and lysine 177 each contribute to the ATP site. The 213-residue stretch at 138 to 350 (NLSDSNGRVG…QSQCKKRALA (213 aa)) folds into the ATP-grasp domain. 1D-myo-inositol 1,3,4-trisphosphate is bound by residues histidine 188 and lysine 220. ATP contacts are provided by residues 209–220 (QEFVNHGGVLFK) and serine 235. Mg(2+) is bound by residues aspartate 300, aspartate 315, and asparagine 317. Asparagine 317 serves as a coordination point for 1D-myo-inositol 1,3,4-trisphosphate.

This sequence belongs to the ITPK1 family. As to quaternary structure, monomer. Mg(2+) serves as cofactor. As to expression, highly expressed in leaves and flowers, and at lower levels in roots, stems, cauline leaves and siliques.

The catalysed reaction is 1D-myo-inositol 3,4,5,6-tetrakisphosphate + ATP = 1D-myo-inositol 1,3,4,5,6-pentakisphosphate + ADP + H(+). The enzyme catalyses 1D-myo-inositol 1,3,4-trisphosphate + ATP = 1D-myo-inositol 1,3,4,5-tetrakisphosphate + ADP + H(+). It catalyses the reaction 1D-myo-inositol 1,3,4-trisphosphate + ATP = 1D-myo-inositol 1,3,4,6-tetrakisphosphate + ADP + H(+). Functionally, kinase that can phosphorylate various inositol polyphosphate such as Ins(3,4,5,6)P4 or Ins(1,3,4)P3. Phosphorylates Ins(3,4,5,6)P4 to form InsP5. This reaction is thought to have regulatory importance, since Ins(3,4,5,6)P4 is an inhibitor of plasma membrane Ca(2+)-activated Cl(-) channels, while Ins(1,3,4,5,6)P5 is not. Also phosphorylates Ins(1,3,4)P3 or a racemic mixture of Ins(1,4,6)P3 and Ins(3,4,6)P3 to form InsP4. Ins(1,3,4,6)P4 is an essential molecule in the hexakisphosphate (InsP6) pathway. This Arabidopsis thaliana (Mouse-ear cress) protein is Inositol-tetrakisphosphate 1-kinase 3 (ITPK3).